Here is a 128-residue protein sequence, read N- to C-terminus: Sulfurtransferase TusD (128 aa).

The Cysteine persulfide intermediate role is filled by Cys78.

The protein belongs to the DsrE/TusD family. Heterohexamer, formed by a dimer of trimers. The hexameric TusBCD complex contains 2 copies each of TusB, TusC and TusD. The TusBCD complex interacts with TusE.

The protein localises to the cytoplasm. Its function is as follows. Part of a sulfur-relay system required for 2-thiolation of 5-methylaminomethyl-2-thiouridine (mnm(5)s(2)U) at tRNA wobble positions. Accepts sulfur from TusA and transfers it in turn to TusE. The protein is Sulfurtransferase TusD of Salmonella dublin (strain CT_02021853).